Reading from the N-terminus, the 352-residue chain is DNA polymerase IV (352 aa).

The UmuC domain occupies 7–187 (IIHIDMDCFY…LSLKKIPGIG (181 aa)). Mg(2+)-binding residues include D11 and D105. E106 is a catalytic residue.

It belongs to the DNA polymerase type-Y family. As to quaternary structure, monomer. Requires Mg(2+) as cofactor.

It localises to the cytoplasm. The catalysed reaction is DNA(n) + a 2'-deoxyribonucleoside 5'-triphosphate = DNA(n+1) + diphosphate. In terms of biological role, poorly processive, error-prone DNA polymerase involved in untargeted mutagenesis. Copies undamaged DNA at stalled replication forks, which arise in vivo from mismatched or misaligned primer ends. These misaligned primers can be extended by PolIV. Exhibits no 3'-5' exonuclease (proofreading) activity. May be involved in translesional synthesis, in conjunction with the beta clamp from PolIII. The chain is DNA polymerase IV from Colwellia psychrerythraea (strain 34H / ATCC BAA-681) (Vibrio psychroerythus).